We begin with the raw amino-acid sequence, 237 residues long: MSLPNPDNRPLLIGPPTGPEAPFPFRMEGEVISGFGRGSKELGIPTANLPVDDENAWIKNIDSGIYFGWASLKLPASHPNSVLYQKPPTSEPVMMDPVQQQQQQQQQQRNQQQQQEGGVGSAQQEKLVDQETGQWQIYPMVMSIGYNPFYKNTVRSAEVHVLGEFAADFYGVGMRLLITGFIRNEKDYSGLEALIADIHFDCEVARHSLARKGWRVRELGVKEGEEEGELDGSWLVR.

A disordered region spans residues 1-23 (MSLPNPDNRPLLIGPPTGPEAPF). Residues Thr46 and Asn48 each contribute to the Mg(2+) site. The disordered stretch occupies residues 82 to 126 (VLYQKPPTSEPVMMDPVQQQQQQQQQQRNQQQQQEGGVGSAQQEK). Low complexity predominate over residues 99–115 (QQQQQQQQQQRNQQQQQ). Glu158 (nucleophile) is an active-site residue.

This sequence belongs to the flavokinase family. The cofactor is Zn(2+). It depends on Mg(2+) as a cofactor.

It catalyses the reaction riboflavin + ATP = FMN + ADP + H(+). It participates in cofactor biosynthesis; FMN biosynthesis; FMN from riboflavin (ATP route): step 1/1. Catalyzes the phosphorylation of riboflavin (vitamin B2) to form flavin mononucleotide (FMN) coenzyme. The sequence is that of Riboflavin kinase (fmn1) from Neurospora crassa (strain ATCC 24698 / 74-OR23-1A / CBS 708.71 / DSM 1257 / FGSC 987).